The following is a 67-amino-acid chain: UPF0434 protein RALTA_A0561 (67 aa).

The protein belongs to the UPF0434 family.

This chain is UPF0434 protein RALTA_A0561, found in Cupriavidus taiwanensis (strain DSM 17343 / BCRC 17206 / CCUG 44338 / CIP 107171 / LMG 19424 / R1) (Ralstonia taiwanensis (strain LMG 19424)).